The following is a 397-amino-acid chain: uncharacterized protein (397 aa).

12 helical membrane passes run 5-25, 43-63, 69-89, 92-112, 131-151, 157-177, 202-222, 233-253, 269-289, 293-313, 333-353, and 360-380; these read LKIL…LWPL, LVLM…GFLF, FKSI…LVFF, WPAY…VFPA, AIYV…GVVA, YVFL…YFGF, FAAL…YSQW, IGIS…LIVL, LKAQ…MLLT, FPMF…VWPA, FVNS…GVLV, and ALVL…LLYD.

This sequence belongs to the major facilitator superfamily.

It is found in the cell membrane. This is an uncharacterized protein from Bacillus subtilis (strain 168).